The primary structure comprises 675 residues: DNA ligase (675 aa).

Residues 34–38, 83–84, and E116 contribute to the NAD(+) site; these read DAEYD and SL. K118 serves as the catalytic N6-AMP-lysine intermediate. R139, E176, K293, and K317 together coordinate NAD(+). Residues C411, C414, C429, and C435 each coordinate Zn(2+). The 82-residue stretch at 594-675 folds into the BRCT domain; that stretch reads AGENPFKGKT…FLAIVNAYKR (82 aa).

This sequence belongs to the NAD-dependent DNA ligase family. LigA subfamily. Mg(2+) is required as a cofactor. Requires Mn(2+) as cofactor.

The enzyme catalyses NAD(+) + (deoxyribonucleotide)n-3'-hydroxyl + 5'-phospho-(deoxyribonucleotide)m = (deoxyribonucleotide)n+m + AMP + beta-nicotinamide D-nucleotide.. DNA ligase that catalyzes the formation of phosphodiester linkages between 5'-phosphoryl and 3'-hydroxyl groups in double-stranded DNA using NAD as a coenzyme and as the energy source for the reaction. It is essential for DNA replication and repair of damaged DNA. This chain is DNA ligase, found in Mannheimia succiniciproducens (strain KCTC 0769BP / MBEL55E).